The primary structure comprises 141 residues: Nucleoside diphosphate kinase (141 aa).

ATP-binding residues include Lys9, Phe57, Arg85, Thr91, Arg102, and Asn112. Residue His115 is the Pros-phosphohistidine intermediate of the active site.

Belongs to the NDK family. Homotetramer. Mg(2+) is required as a cofactor.

The protein resides in the cytoplasm. The enzyme catalyses a 2'-deoxyribonucleoside 5'-diphosphate + ATP = a 2'-deoxyribonucleoside 5'-triphosphate + ADP. It catalyses the reaction a ribonucleoside 5'-diphosphate + ATP = a ribonucleoside 5'-triphosphate + ADP. Functionally, major role in the synthesis of nucleoside triphosphates other than ATP. The ATP gamma phosphate is transferred to the NDP beta phosphate via a ping-pong mechanism, using a phosphorylated active-site intermediate. The sequence is that of Nucleoside diphosphate kinase from Chlamydia trachomatis serovar A (strain ATCC VR-571B / DSM 19440 / HAR-13).